Here is a 284-residue protein sequence, read N- to C-terminus: Shikimate dehydrogenase (NADP(+)) (284 aa).

Shikimate is bound by residues 20–22 (SIS) and Ser-67. Catalysis depends on Lys-71, which acts as the Proton acceptor. NADP(+) is bound at residue Asp-83. Positions 92 and 107 each coordinate shikimate. NADP(+)-binding positions include 129–133 (GAGGA) and Ile-227. A shikimate-binding site is contributed by Tyr-229. NADP(+) is bound at residue Gly-250.

It belongs to the shikimate dehydrogenase family. Homodimer.

It carries out the reaction shikimate + NADP(+) = 3-dehydroshikimate + NADPH + H(+). The protein operates within metabolic intermediate biosynthesis; chorismate biosynthesis; chorismate from D-erythrose 4-phosphate and phosphoenolpyruvate: step 4/7. Functionally, involved in the biosynthesis of the chorismate, which leads to the biosynthesis of aromatic amino acids. Catalyzes the reversible NADPH linked reduction of 3-dehydroshikimate (DHSA) to yield shikimate (SA). This Streptococcus pneumoniae serotype 2 (strain D39 / NCTC 7466) protein is Shikimate dehydrogenase (NADP(+)).